The sequence spans 708 residues: Polyribonucleotide nucleotidyltransferase (708 aa).

Positions 488 and 494 each coordinate Mg(2+). Positions 555–614 (PRIYTMKIPQKKIAEVIGKGGATIRQLTEETGTTIEIGDDGTIKIAATDGESAANAISRI) constitute a KH domain. An S1 motif domain is found at 624-692 (GTIYEGKVVR…RQGRVRLSIK (69 aa)).

This sequence belongs to the polyribonucleotide nucleotidyltransferase family. In terms of assembly, component of the RNA degradosome, which is a multiprotein complex involved in RNA processing and mRNA degradation. Mg(2+) serves as cofactor.

It localises to the cytoplasm. The catalysed reaction is RNA(n+1) + phosphate = RNA(n) + a ribonucleoside 5'-diphosphate. Involved in mRNA degradation. Catalyzes the phosphorolysis of single-stranded polyribonucleotides processively in the 3'- to 5'-direction. The sequence is that of Polyribonucleotide nucleotidyltransferase from Pseudoalteromonas translucida (strain TAC 125).